Reading from the N-terminus, the 90-residue chain is MSLQEQFDQAASNVRNLKSLPSDNDLLELYALFKQASAGDADPANRPGLLDLKGKAKFDAWHKKAGLSKEDAQKAYIAKVESLIASLGLQ.

The 87-residue stretch at Leu-3–Leu-89 folds into the ACB domain. An acyl-CoA-binding positions include Arg-15, Tyr-30 to Lys-34, Lys-53, Lys-57, and Tyr-76.

This sequence belongs to the ACBP family.

Binds medium- and long-chain acyl-CoA esters with very high affinity and may function as an intracellular carrier of acyl-CoA esters. In Manduca sexta (Tobacco hawkmoth), this protein is Acyl-CoA-binding protein homolog.